Here is a 341-residue protein sequence, read N- to C-terminus: MIETDRLIVPTAVGPQEEQIERALRPRTLAEYVGQAKAREQLEIFIHAARKRSEALDHVLLFGPPGLGKTTLAHIIAREMGVNLRQTSGPVLERAGDLAALLTNLEPHDVLFIDEIHRLSPVVEEVLYPALEDFQIDIMIGEGPAARSVKLDLPPFTLVGATTRAGMLTNPLRDRFGIVARLEFYSAEELGYIVHRSAGLLQMNLDEAGALEIARRSRGTPRIANRLLRRVRDYAEVKAGGEATGAVADAALVMLDVDRAGLDVMDRKLLGAVVEKFMGGPVGLDNLAAAIGEERDTIEDVLEPYLIQQGYLQRTPRGRVATPLAYRHLGIATPASDAELF.

A large ATPase domain (RuvB-L) region spans residues Thr4 to Tyr185. ATP is bound by residues Leu24, Arg25, Gly66, Lys69, Thr70, Thr71, Glu132–Phe134, Arg175, Tyr185, and Arg222. Thr70 is a binding site for Mg(2+). The tract at residues Ser186–Asp256 is small ATPAse domain (RuvB-S). Residues Arg259 to Phe341 are head domain (RuvB-H). Positions 295, 314, and 319 each coordinate DNA.

Belongs to the RuvB family. Homohexamer. Forms an RuvA(8)-RuvB(12)-Holliday junction (HJ) complex. HJ DNA is sandwiched between 2 RuvA tetramers; dsDNA enters through RuvA and exits via RuvB. An RuvB hexamer assembles on each DNA strand where it exits the tetramer. Each RuvB hexamer is contacted by two RuvA subunits (via domain III) on 2 adjacent RuvB subunits; this complex drives branch migration. In the full resolvosome a probable DNA-RuvA(4)-RuvB(12)-RuvC(2) complex forms which resolves the HJ.

Its subcellular location is the cytoplasm. The enzyme catalyses ATP + H2O = ADP + phosphate + H(+). The RuvA-RuvB-RuvC complex processes Holliday junction (HJ) DNA during genetic recombination and DNA repair, while the RuvA-RuvB complex plays an important role in the rescue of blocked DNA replication forks via replication fork reversal (RFR). RuvA specifically binds to HJ cruciform DNA, conferring on it an open structure. The RuvB hexamer acts as an ATP-dependent pump, pulling dsDNA into and through the RuvAB complex. RuvB forms 2 homohexamers on either side of HJ DNA bound by 1 or 2 RuvA tetramers; 4 subunits per hexamer contact DNA at a time. Coordinated motions by a converter formed by DNA-disengaged RuvB subunits stimulates ATP hydrolysis and nucleotide exchange. Immobilization of the converter enables RuvB to convert the ATP-contained energy into a lever motion, pulling 2 nucleotides of DNA out of the RuvA tetramer per ATP hydrolyzed, thus driving DNA branch migration. The RuvB motors rotate together with the DNA substrate, which together with the progressing nucleotide cycle form the mechanistic basis for DNA recombination by continuous HJ branch migration. Branch migration allows RuvC to scan DNA until it finds its consensus sequence, where it cleaves and resolves cruciform DNA. The chain is Holliday junction branch migration complex subunit RuvB from Thiobacillus denitrificans (strain ATCC 25259 / T1).